Here is a 367-residue protein sequence, read N- to C-terminus: Ataxin-7-like protein 3 (367 aa).

An SGF11-type zinc finger spans residues 84–105; sequence CVCPNCSRSIAASRFAPHLEKC. The span at 116-125 shows a compositional bias: low complexity; it reads ANRRIASSNN. Positions 116–184 are disordered; sequence ANRRIASSNN…GELSGSVNPD (69 aa). A compositionally biased stretch (acidic residues) spans 132–141; sequence DQEDNDDIND. The region spanning 199–266 is the SCA7 domain; sequence LGPEELRSIL…TMLENEAYEP (68 aa). A compositionally biased stretch (low complexity) spans 280–299; that stretch reads ASSDISPSDSASSKASTNNS. The interval 280–367 is disordered; sequence ASSDISPSDS…PAPSIYDDLN (88 aa). Residues 318–329 show a composition bias toward basic and acidic residues; sequence GERDKAQERDRI. Positions 330 to 346 are enriched in low complexity; sequence AGSGSSGSSSQNALGLS.

It belongs to the SGF11 family. Component of some SAGA transcription coactivator-HAT complexes. Within the SAGA complex, participates in a subcomplex of SAGA called the DUB module (deubiquitination module).

Its subcellular location is the nucleus. Functionally, component of the transcription regulatory histone acetylation (HAT) complex SAGA, a multiprotein complex that activates transcription by remodeling chromatin and mediating histone acetylation and deubiquitination. Within the SAGA complex, participates in a subcomplex that specifically deubiquitinates histone H2B. The SAGA complex is recruited to specific gene promoters by activators, where it is required for transcription. This is Ataxin-7-like protein 3 (atxn7l3) from Danio rerio (Zebrafish).